The following is a 101-amino-acid chain: Small ribosomal subunit protein uS10 (101 aa).

This sequence belongs to the universal ribosomal protein uS10 family. In terms of assembly, part of the 30S ribosomal subunit.

In terms of biological role, involved in the binding of tRNA to the ribosomes. In Mycobacterium avium (strain 104), this protein is Small ribosomal subunit protein uS10.